Consider the following 734-residue polypeptide: MATKFPKFSQGLAEDPTTRRIWYGIATAHDFESHDGMTEESLYQKIFASHFGQLAIIFLWTSGNLFHVAWQGNFEQWGQDPLHVRPIAHAIWDPHFGQPAVEAFTRGGAAGPVNISYSGVYQWWYTIGMRSSNDLYTGALFLLVGAAILLFAGWLHLQPKFQPSLSWFKNAESRLNHHLAGLFGVSSLAWTGHLVHVAIPESRGQHVGWDNFLTTLPHPAGLAPFFNGNWSVYAQNPDSASHLFGTSTGAGTAILTFLGGFHPQTQSLWLTDMAHHHLAIAVVFILAGHMYRTNFGIGHSMREILEAHRAPSGRLGLGHKGLFDTVNNSLHFQLGLALASLGVITSLVAQHMYSLPPYAFMAQDFTTMSALYTHHQYIAGFIMTGAFAHGAIFFIRDYDPIQNEGNVLARMLEHKEALISHLSWVTLFLGFHTLGLYVHNDVMLAFGTPEKQILIEPVFAQWIQASHGKALYGFDVLLSSADSPATSASQSIWLPGWLDAINSSSNSLFLTIGPGDFLVHHAIALGLHTTTLILVKGALDARGSKLMPDKKDFGYSFPCDGPGRGGTCDISAWDAFYLAVFWMLNTIGWTTFYWHWKHLALWQGNAAQFNESSTYLMGWLRDYLWLNSSQLINGYNPFGMNSLSVWAWMFLFGHLVWATGFMFLISWRGYWQELIETLAWAHERTPLANLVRWKDKPVALSIVQARLVGLAHFSVGYVFTYAAFVIASTSGKFG.

The next 8 helical transmembrane spans lie at I46–A69, L135–Q158, L175–I199, M273–Y291, L330–Y353, S369–I395, A417–H439, and F517–V535. [4Fe-4S] cluster is bound by residues C559 and C568. Transmembrane regions (helical) follow at residues A575–W596 and L643–I665. Residues H654, M662, and Y670 each coordinate chlorophyll a. W671 contacts phylloquinone. Residues L707–A727 form a helical membrane-spanning segment.

Belongs to the PsaA/PsaB family. As to quaternary structure, the PsaA/B heterodimer binds the P700 chlorophyll special pair and subsequent electron acceptors. PSI consists of a core antenna complex that captures photons, and an electron transfer chain that converts photonic excitation into a charge separation. The eukaryotic PSI reaction center is composed of at least 11 subunits. The cofactor is P700 is a chlorophyll a/chlorophyll a' dimer, A0 is one or more chlorophyll a, A1 is one or both phylloquinones and FX is a shared 4Fe-4S iron-sulfur center..

It is found in the plastid. Its subcellular location is the chloroplast thylakoid membrane. The enzyme catalyses reduced [plastocyanin] + hnu + oxidized [2Fe-2S]-[ferredoxin] = oxidized [plastocyanin] + reduced [2Fe-2S]-[ferredoxin]. In terms of biological role, psaA and PsaB bind P700, the primary electron donor of photosystem I (PSI), as well as the electron acceptors A0, A1 and FX. PSI is a plastocyanin/cytochrome c6-ferredoxin oxidoreductase, converting photonic excitation into a charge separation, which transfers an electron from the donor P700 chlorophyll pair to the spectroscopically characterized acceptors A0, A1, FX, FA and FB in turn. Oxidized P700 is reduced on the lumenal side of the thylakoid membrane by plastocyanin or cytochrome c6. The sequence is that of Photosystem I P700 chlorophyll a apoprotein A2 from Nephroselmis olivacea (Green alga).